The following is a 238-amino-acid chain: Octanoyltransferase (238 aa).

One can recognise a BPL/LPL catalytic domain in the interval 44–224; it reads AGGPDSLLLL…AVLDALDGRI (181 aa). Substrate contacts are provided by residues 82–89, 154–156, and 167–169; these read RGGKITWH, AIG, and GFA. Cys185 acts as the Acyl-thioester intermediate in catalysis.

The protein belongs to the LipB family.

It is found in the cytoplasm. It catalyses the reaction octanoyl-[ACP] + L-lysyl-[protein] = N(6)-octanoyl-L-lysyl-[protein] + holo-[ACP] + H(+). It participates in protein modification; protein lipoylation via endogenous pathway; protein N(6)-(lipoyl)lysine from octanoyl-[acyl-carrier-protein]: step 1/2. Catalyzes the transfer of endogenously produced octanoic acid from octanoyl-acyl-carrier-protein onto the lipoyl domains of lipoate-dependent enzymes. Lipoyl-ACP can also act as a substrate although octanoyl-ACP is likely to be the physiological substrate. The polypeptide is Octanoyltransferase (Mycolicibacterium gilvum (strain PYR-GCK) (Mycobacterium gilvum (strain PYR-GCK))).